We begin with the raw amino-acid sequence, 247 residues long: Putative 2-succinyl-6-hydroxy-2,4-cyclohexadiene-1-carboxylate synthase (247 aa).

An AB hydrolase-1 domain is found at 4-229; the sequence is IIFLHGLLGT…CAGHNSHLEN (226 aa).

It belongs to the AB hydrolase superfamily. MenH family. As to quaternary structure, monomer.

The catalysed reaction is 5-enolpyruvoyl-6-hydroxy-2-succinyl-cyclohex-3-ene-1-carboxylate = (1R,6R)-6-hydroxy-2-succinyl-cyclohexa-2,4-diene-1-carboxylate + pyruvate. It participates in quinol/quinone metabolism; 1,4-dihydroxy-2-naphthoate biosynthesis; 1,4-dihydroxy-2-naphthoate from chorismate: step 3/7. Its pathway is quinol/quinone metabolism; menaquinone biosynthesis. In terms of biological role, catalyzes a proton abstraction reaction that results in 2,5-elimination of pyruvate from 2-succinyl-5-enolpyruvyl-6-hydroxy-3-cyclohexene-1-carboxylate (SEPHCHC) and the formation of 2-succinyl-6-hydroxy-2,4-cyclohexadiene-1-carboxylate (SHCHC). This chain is Putative 2-succinyl-6-hydroxy-2,4-cyclohexadiene-1-carboxylate synthase, found in Haemophilus influenzae (strain ATCC 51907 / DSM 11121 / KW20 / Rd).